A 353-amino-acid chain; its full sequence is Photosystem II D2 protein (353 aa).

T2 carries the post-translational modification N-acetylthreonine. A Phosphothreonine modification is found at T2. A helical membrane pass occupies residues 41–61 (CAYFAVGGWFTGTTFVTSWYT). H118 is a chlorophyll a binding site. A helical transmembrane segment spans residues 125-141 (GFMLRQFELARSVQLRP). The pheophytin a site is built by Q130 and N143. Residues 153–166 (VFVSVFLIYPLGQS) form a helical membrane-spanning segment. A chlorophyll a-binding site is contributed by H198. Residues 208 to 228 (AALLCAIHGATVENTLFEDGD) form a helical membrane-spanning segment. Positions 215 and 262 each coordinate a plastoquinone. H215 lines the Fe cation pocket. Residue H269 participates in Fe cation binding. The helical transmembrane segment at 279–295 (GLWMSALGVVGLALNLR) threads the bilayer.

This sequence belongs to the reaction center PufL/M/PsbA/D family. In terms of assembly, PSII is composed of 1 copy each of membrane proteins PsbA, PsbB, PsbC, PsbD, PsbE, PsbF, PsbH, PsbI, PsbJ, PsbK, PsbL, PsbM, PsbT, PsbX, PsbY, PsbZ, Psb30/Ycf12, at least 3 peripheral proteins of the oxygen-evolving complex and a large number of cofactors. It forms dimeric complexes. The D1/D2 heterodimer binds P680, chlorophylls that are the primary electron donor of PSII, and subsequent electron acceptors. It shares a non-heme iron and each subunit binds pheophytin, quinone, additional chlorophylls, carotenoids and lipids. There is also a Cl(-1) ion associated with D1 and D2, which is required for oxygen evolution. The PSII complex binds additional chlorophylls, carotenoids and specific lipids. serves as cofactor.

The protein localises to the plastid. It localises to the chloroplast thylakoid membrane. It carries out the reaction 2 a plastoquinone + 4 hnu + 2 H2O = 2 a plastoquinol + O2. Its function is as follows. Photosystem II (PSII) is a light-driven water:plastoquinone oxidoreductase that uses light energy to abstract electrons from H(2)O, generating O(2) and a proton gradient subsequently used for ATP formation. It consists of a core antenna complex that captures photons, and an electron transfer chain that converts photonic excitation into a charge separation. The D1/D2 (PsbA/PsbD) reaction center heterodimer binds P680, the primary electron donor of PSII as well as several subsequent electron acceptors. D2 is needed for assembly of a stable PSII complex. This chain is Photosystem II D2 protein, found in Lactuca sativa (Garden lettuce).